The sequence spans 876 residues: MAP7 domain-containing protein 3 (876 aa).

Met-1 bears the N-acetylmethionine mark. Residues 65 to 144 (NDIKQRLARE…DEAQKEKFTA (80 aa)) adopt a coiled-coil conformation. Disordered regions lie at residues 72 to 137 (ARER…KDEA) and 170 to 246 (AMAN…KPRV). Over residues 171-183 (MANSESKTANKRS) the composition is skewed to polar residues. Ser-185 is modified (phosphoserine). Residues 191–211 (QGTSALIRQMPLSSAGLQNSV) show a composition bias toward polar residues. The segment covering 214-244 (RKTDKERSSSLNRRDSNLHSSTDKEQAERKP) has biased composition (basic and acidic residues). Ser-322 is modified (phosphoserine). The disordered stretch occupies residues 407-475 (EAAPEGSLEA…ARDAPKKSEM (69 aa)). Over residues 425–438 (APKESVKGSPKESM) the composition is skewed to basic and acidic residues. 3 positions are modified to phosphoserine: Ser-441, Ser-457, and Ser-461. The span at 465–475 (KARDAPKKSEM) shows a compositional bias: basic and acidic residues. Residue Ser-490 is modified to Phosphoserine. 3 disordered regions span residues 509 to 533 (SPIS…SKQS), 613 to 697 (QREK…KKEH), and 723 to 754 (RKTD…SDKD). Positions 510-521 (PISTNRQIQKNC) are enriched in polar residues. Ser-524 is subject to Phosphoserine. 2 coiled-coil regions span residues 558–640 (VKKK…MAKE) and 689–724 (EADK…RTRK). Composition is skewed to basic and acidic residues over residues 613–639 (QREK…DMAK) and 680–697 (GDAK…KKEH). A compositionally biased stretch (acidic residues) spans 742-752 (EEAEADNEESD). Ser-770 and Ser-817 each carry phosphoserine. Residues 802–876 (PKTYFNGDLK…LPKSSDTFRQ (75 aa)) are disordered. Positions 820–830 (DTSIQEVVSRP) are enriched in polar residues. Over residues 831–842 (SSKRMTSHTTKT) the composition is skewed to basic residues. Residue Ser-832 is modified to Phosphoserine. Over residues 848-860 (TNTTSRSSAQTKS) the composition is skewed to polar residues. The span at 861-876 (EGFHDILPKSSDTFRQ) shows a compositional bias: basic and acidic residues.

Belongs to the MAP7 family. As to quaternary structure, interacts (via N-terminus coiled coil domains) with tubulin and microtubules.

It is found in the cytoplasm. The protein resides in the cytoskeleton. Its subcellular location is the spindle. Its function is as follows. Promotes the assembly and stability of microtubules. The chain is MAP7 domain-containing protein 3 (MAP7D3) from Homo sapiens (Human).